Here is a 209-residue protein sequence, read N- to C-terminus: Probable phosphatidylglycerophosphate synthase (209 aa).

Transmembrane regions (helical) follow at residues 32–52 (ILTL…FYGG), 105–125 (ALIG…LILT), 147–167 (WGGK…VLPL), and 171–191 (LHVA…ITGV).

It belongs to the CDP-alcohol phosphatidyltransferase class-I family.

Its subcellular location is the cell membrane. The catalysed reaction is a CDP-1,2-diacyl-sn-glycerol + sn-glycerol 3-phosphate = a 1,2-diacyl-sn-glycero-3-phospho-(1'-sn-glycero-3'-phosphate) + CMP + H(+). It functions in the pathway lipid metabolism; phospholipid metabolism. Functionally, probably catalyzes the synthesis of phosphatidylglycerophosphate by transferring a phosphatidyl group from CDP-diacylglycerol to glycerol 3-phosphate. The protein is Probable phosphatidylglycerophosphate synthase of Mycobacterium tuberculosis (strain CDC 1551 / Oshkosh).